Here is a 118-residue protein sequence, read N- to C-terminus: Large ribosomal subunit protein uL18 (118 aa).

It belongs to the universal ribosomal protein uL18 family. Part of the 50S ribosomal subunit; part of the 5S rRNA/L5/L18/L25 subcomplex. Contacts the 5S and 23S rRNAs.

In terms of biological role, this is one of the proteins that bind and probably mediate the attachment of the 5S RNA into the large ribosomal subunit, where it forms part of the central protuberance. This chain is Large ribosomal subunit protein uL18, found in Rickettsia canadensis (strain McKiel).